An 88-amino-acid polypeptide reads, in one-letter code: Large ribosomal subunit protein eL37 (88 aa).

Residues C19, C22, C34, and C37 each coordinate Zn(2+). The C4-type zinc-finger motif lies at C19–C37.

It belongs to the eukaryotic ribosomal protein eL37 family. The cofactor is Zn(2+).

Functionally, binds to the 23S rRNA. The sequence is that of Large ribosomal subunit protein eL37 (RPL37) from Debaryomyces hansenii (strain ATCC 36239 / CBS 767 / BCRC 21394 / JCM 1990 / NBRC 0083 / IGC 2968) (Yeast).